A 600-amino-acid polypeptide reads, in one-letter code: NADH-quinone oxidoreductase subunit C/D (600 aa).

Residues 1-190 (MVNNMTDLTA…SPFELTKAKQ (190 aa)) are NADH dehydrogenase I subunit C. An NADH dehydrogenase I subunit D region spans residues 214 to 600 (DFMFLNLGPN…IDFVMSDVDR (387 aa)).

In the N-terminal section; belongs to the complex I 30 kDa subunit family. The protein in the C-terminal section; belongs to the complex I 49 kDa subunit family. As to quaternary structure, NDH-1 is composed of 13 different subunits. Subunits NuoB, CD, E, F, and G constitute the peripheral sector of the complex.

Its subcellular location is the cell inner membrane. The catalysed reaction is a quinone + NADH + 5 H(+)(in) = a quinol + NAD(+) + 4 H(+)(out). NDH-1 shuttles electrons from NADH, via FMN and iron-sulfur (Fe-S) centers, to quinones in the respiratory chain. The immediate electron acceptor for the enzyme in this species is believed to be ubiquinone. Couples the redox reaction to proton translocation (for every two electrons transferred, four hydrogen ions are translocated across the cytoplasmic membrane), and thus conserves the redox energy in a proton gradient. This is NADH-quinone oxidoreductase subunit C/D from Shigella boydii serotype 18 (strain CDC 3083-94 / BS512).